A 73-amino-acid polypeptide reads, in one-letter code: Serine rich endogenous peptide 1 (73 aa).

Positions 1–28 (MGMSGSSGLVHVLMLLLLLSILFHHTES) are cleaved as a signal peptide. The segment at 48–73 (YKPNTAVETPPSRSRRGGGGQNTGAD) is disordered. Residues 53-67 (AVETPPSRSRRGGGG) carry the SCOOP motif motif. Residues 59-61 (SRS) carry the SxS motif essential for MIK2 binding motif. The span at 64–73 (GGGGQNTGAD) shows a compositional bias: gly residues.

It belongs to the serine rich endogenous peptide (SCOOP) phytocytokine family. In terms of assembly, interacts with MIK2 (via extracellular leucine-rich repeat domain); this interaction triggers the formation of complex between MIK2 and the BAK1/SERK3 and SERK4 coreceptors, and subsequent BAK1 activation by phosphorylation. In terms of tissue distribution, mostly expressed in leaves and flowers, and, to a lower extent, in seedlings shoots.

Its subcellular location is the cell membrane. The protein localises to the secreted. The protein resides in the extracellular space. It is found in the apoplast. In terms of biological role, brassicaceae-specific phytocytokine (plant endogenous peptide released into the apoplast) perceived by MIK2 in a BAK1/SERK3 and SERK4 coreceptors-dependent manner, that modulates various physiological and antimicrobial processes including growth prevention and reactive oxygen species (ROS) response regulation. In Arabidopsis thaliana (Mouse-ear cress), this protein is Serine rich endogenous peptide 1.